We begin with the raw amino-acid sequence, 139 residues long: Holo-[acyl-carrier-protein] synthase (139 aa).

Aspartate 8 and glutamate 61 together coordinate Mg(2+).

It belongs to the P-Pant transferase superfamily. AcpS family. Requires Mg(2+) as cofactor.

Its subcellular location is the cytoplasm. The catalysed reaction is apo-[ACP] + CoA = holo-[ACP] + adenosine 3',5'-bisphosphate + H(+). In terms of biological role, transfers the 4'-phosphopantetheine moiety from coenzyme A to a Ser of acyl-carrier-protein. In Rhodopseudomonas palustris (strain BisA53), this protein is Holo-[acyl-carrier-protein] synthase.